Here is a 312-residue protein sequence, read N- to C-terminus: Malate dehydrogenase (312 aa).

Residues 12–17 (GSGFTG) and aspartate 36 contribute to the NAD(+) site. Positions 87 and 93 each coordinate substrate. Residues asparagine 100 and 123–125 (LTN) contribute to the NAD(+) site. Asparagine 125 serves as a coordination point for substrate. Serine 149 is subject to Phosphoserine. Arginine 156 contacts substrate. Histidine 180 functions as the Proton acceptor in the catalytic mechanism.

Belongs to the LDH/MDH superfamily. MDH type 3 family.

It carries out the reaction (S)-malate + NAD(+) = oxaloacetate + NADH + H(+). In terms of biological role, catalyzes the reversible oxidation of malate to oxaloacetate. In Oceanobacillus iheyensis (strain DSM 14371 / CIP 107618 / JCM 11309 / KCTC 3954 / HTE831), this protein is Malate dehydrogenase.